The sequence spans 359 residues: Cyclin-Y-like protein 1 (359 aa).

3 positions are modified to phosphoserine: Ser-67, Ser-105, and Ser-112. The region spanning 145-267 (VTLAIYYHIK…CQILKDITVE (123 aa)) is the Cyclin N-terminal domain. At Ser-344 the chain carries Phosphoserine.

This sequence belongs to the cyclin family. Cyclin Y subfamily. In terms of assembly, interacts with CDK16; this interaction mutually increases the stability of CDK16 and CCNYL1 and increases the kinase activity of CDK16.

The protein resides in the cell membrane. In terms of biological role, key regulator of Wnt signaling implicated in various biological processes including male fertility, embryonic neurogenesis and cortex development. Activates the cyclin-dependent kinase CDK16, and promotes sperm maturation. The sequence is that of Cyclin-Y-like protein 1 from Homo sapiens (Human).